A 565-amino-acid chain; its full sequence is Calcium-dependent protein kinase 21 (565 aa).

The N-myristoyl glycine moiety is linked to residue Gly-2. The segment at 28–55 is disordered; that stretch reads PVPDAEAASPRKDGVDGDGDDVRGGGGG. The segment covering 36–50 has biased composition (basic and acidic residues); the sequence is SPRKDGVDGDGDDVR. A Protein kinase domain is found at 77 to 358; sequence YVLGKELGRG…AKQVLEHPWL (282 aa). Residues 83–91 and Lys-106 each bind ATP; that span reads LGRGEFGVT. Asp-224 functions as the Proton acceptor in the catalytic mechanism. The autoinhibitory domain stretch occupies residues 364 to 394; that stretch reads APNVSLGDAVRARLQQFSAMNKFKKKALGVV. 4 consecutive EF-hand domains span residues 401-436, 437-472, 473-500, and 504-539; these read EEVD…NGQP, VPEP…LKKM, SNDE…ELRE, and PNEQ…GADW. Residues Asp-414, Asp-416, Asn-418, His-420, Glu-425, Asp-450, Asp-452, Asn-454, Thr-456, Glu-461, Asp-486, Asp-488, Ser-490, Glu-497, Asp-517, Asp-519, Asp-521, Arg-523, and Glu-528 each contribute to the Ca(2+) site.

The protein belongs to the protein kinase superfamily. Ser/Thr protein kinase family. CDPK subfamily. Expressed in spikelets and developing seeds.

It is found in the membrane. The catalysed reaction is L-seryl-[protein] + ATP = O-phospho-L-seryl-[protein] + ADP + H(+). It catalyses the reaction L-threonyl-[protein] + ATP = O-phospho-L-threonyl-[protein] + ADP + H(+). Its activity is regulated as follows. Activated by calcium. Autophosphorylation may play an important role in the regulation of the kinase activity. May play a role in signal transduction pathways that involve calcium as a second messenger. Functions in signal transduction pathways that positively regulate responses to abscisic acid (ABA) and salt stress. This Oryza sativa subsp. japonica (Rice) protein is Calcium-dependent protein kinase 21.